The primary structure comprises 481 residues: Phenylalanine--tRNA ligase alpha subunit (481 aa).

L-phenylalanine contacts are provided by residues threonine 322, glutamine 361–glutamate 363, and tyrosine 401. A Mg(2+)-binding site is contributed by glutamate 403. Phenylalanine 426 lines the L-phenylalanine pocket.

This sequence belongs to the class-II aminoacyl-tRNA synthetase family. Phe-tRNA synthetase alpha subunit type 2 subfamily. In terms of assembly, tetramer of two alpha and two beta subunits. Requires Mg(2+) as cofactor.

The protein localises to the cytoplasm. The catalysed reaction is tRNA(Phe) + L-phenylalanine + ATP = L-phenylalanyl-tRNA(Phe) + AMP + diphosphate + H(+). The chain is Phenylalanine--tRNA ligase alpha subunit from Methanoculleus marisnigri (strain ATCC 35101 / DSM 1498 / JR1).